A 650-amino-acid polypeptide reads, in one-letter code: AP-1-like transcription factor YAP1 (650 aa).

The segment at 1–89 is disordered; the sequence is MSVSTAKRSL…AFRERKERKM (89 aa). Phosphoserine occurs at positions 9, 14, and 17. Composition is skewed to basic and acidic residues over residues 22–50, 58–68, and 80–89; these read EGSK…EQPK, KKQDLDPETKQ, and AFRERKERKM. 2 short sequence motifs (bipartite nuclear localization signal) span residues 35-42 and 68-75; these read HRRTGTRD and QKRTAQNR. Positions 64–127 constitute a bZIP domain; sequence PETKQKRTAQ…ITLVNELKKY (64 aa). Residues 67-90 form a basic motif region; it reads KQKRTAQNRAAQRAFRERKERKMK. The segment at 92–120 is leucine-zipper; it reads LEKKVQSLESIQQQNEVEATFLRDQLITL. 2 disordered regions span residues 149 to 169 and 183 to 251; these read HFSK…PNDD and QYPL…PNSS. Residues 150 to 162 show a composition bias toward polar residues; that stretch reads FSKNNVNHSNSEP. Position 165 is a phosphothreonine (Thr-165). Positions 195–209 are enriched in polar residues; the sequence is SKNVGKQLPSPNDPS. Residue Ser-204 is modified to Phosphoserine. The transcription activation 1 stretch occupies residues 220 to 378; that stretch reads QKKLSDATDS…YENSFSGFGR (159 aa). Residues 226–246 are compositionally biased toward low complexity; sequence ATDSSSATLDSLSNSNDVLNN. The tract at residues 303-315 is n-CRD; sequence CSKMNQVCGTRQC. Cystine bridges form between Cys-303–Cys-598, Cys-310–Cys-629, Cys-598–Cys-620, Cys-598–Cys-629, and Cys-620–Cys-629. Ser-372 carries the post-translational modification Phosphoserine. Residues 392–414 are compositionally biased toward low complexity; sequence DNSTGSTDSTGSTGNKNKKNNNN. 3 disordered regions span residues 392–419, 510–532, and 551–591; these read DNST…DDVL, LFGE…DDES, and LQSV…VPSK. The transcription activation 2 stretch occupies residues 430–537; it reads NQVTNFFSPG…SDDESSLIKN (108 aa). Ser-528 is modified (phosphoserine). Residues 551–570 show a composition bias toward polar residues; the sequence is LQSVPGNESEISQKNGSSLQ. Residues 571 to 580 show a composition bias toward low complexity; sequence NADKINNGND. A c-CRD region spans residues 598–629; sequence CSEIWDRITTHPKYSDIDVDGLCSELMAKAKC. Positions 614-621 match the Nuclear export signal motif; it reads IDVDGLCS.

Belongs to the bZIP family. YAP subfamily. As to quaternary structure, interacts independent of oxidation state in the cytoplasm with the karyopherin PSE1/KAP121 (and less strongly with KAP123). The reduced form of YAP1 interacts in the nucleus with the nuclear export protein CRM1, and in the cytoplasm with YBP1 and the peroxiredoxin HYR1/GPX3/ORP1. Interacts with RBG1. Depending on the oxidative stress inducing agent, YAP1 can undergo two distinct conformational changes, both involving disulfide bond formation, and both masking the nuclear export signal, thus abolishing nuclear export by CRM1/exportin 1. The disulfide stress-inducing agent diamide leads to the formation of one of three possible disulfide bonds in the c-CRD. Peroxide stress induces the formation of the HYR1/GPX3- and YBP1-dependent interdomain disulfide bond between Cys-303 and Cys-598 (causing nuclear localization of YAP1), and the possibly stabilizing bond between Cys-310 and Cys-629 (required for full activity of YAP1).

It localises to the nucleus. Its subcellular location is the cytoplasm. In terms of biological role, transcription activator involved in oxidative stress response and redox homeostasis. Regulates the transcription of genes encoding antioxidant enzymes and components of the cellular thiol-reducing pathways, including the thioredoxin system (TRX2, TRR1), the glutaredoxin system (GSH1, GLR1), superoxide dismutase (SOD1, SOD2), glutathione peroxidase (GPX2), and thiol-specific peroxidases (TSA1, AHP1). The induction of some of these genes requires the cooperative action of both, YAP1 and SKN7. Preferentially binds to promoters with the core binding site 5'-TTA[CG]TAA-3'. Activity of the transcription factor is controlled through oxidation of specific cysteine residues resulting in the alteration of its subcellular location. Oxidative stress (as well as carbon stress, but not increased temperature, acidic pH, or ionic stress) induces nuclear accumulation and as a result YAP1 transcriptional activity. Activation by hydrogen peroxide or thiol-reactive chemicals elicit distinct adaptive gene responses. Nuclear export is restored when disulfide bonds are reduced by thioredoxin (TRX2), whose expression is controlled by YAP1, providing a mechanism for negative autoregulation. When overexpressed, YAP1 confers pleiotropic drug-resistance and increases cellular tolerance to cadmium, iron chelators and zinc. The sequence is that of AP-1-like transcription factor YAP1 from Saccharomyces cerevisiae (strain ATCC 204508 / S288c) (Baker's yeast).